The sequence spans 348 residues: Mycothiol acetyltransferase (348 aa).

N-acetyltransferase domains are found at residues 12 to 156 and 169 to 330; these read TSMR…VDVT and VAVR…HGTP. Glu44 is a 1D-myo-inositol 2-(L-cysteinylamino)-2-deoxy-alpha-D-glucopyranoside binding site. Residue 91 to 93 coordinates acetyl-CoA; it reads LVV. Residues Glu196, Lys235, and Glu253 each coordinate 1D-myo-inositol 2-(L-cysteinylamino)-2-deoxy-alpha-D-glucopyranoside. Acetyl-CoA is bound by residues 257–259 and 264–270; these read VGV and QGLGMGR. Tyr291 contributes to the 1D-myo-inositol 2-(L-cysteinylamino)-2-deoxy-alpha-D-glucopyranoside binding site. 296 to 301 provides a ligand contact to acetyl-CoA; the sequence is NTVAVH. Positions 320–348 are disordered; the sequence is PPAGSPAHGTPLVRVTDTPSSPGDATMGS. Residues 336 to 348 are compositionally biased toward polar residues; the sequence is DTPSSPGDATMGS.

This sequence belongs to the acetyltransferase family. MshD subfamily. Monomer.

The enzyme catalyses 1D-myo-inositol 2-(L-cysteinylamino)-2-deoxy-alpha-D-glucopyranoside + acetyl-CoA = mycothiol + CoA + H(+). In terms of biological role, catalyzes the transfer of acetyl from acetyl-CoA to desacetylmycothiol (Cys-GlcN-Ins) to form mycothiol. In Cellulomonas flavigena (strain ATCC 482 / DSM 20109 / BCRC 11376 / JCM 18109 / NBRC 3775 / NCIMB 8073 / NRS 134), this protein is Mycothiol acetyltransferase.